Consider the following 267-residue polypeptide: Orotidine 5'-phosphate decarboxylase (267 aa).

Substrate contacts are provided by residues D40, 62-64 (KTH), 93-102 (DRKFADIGNT), Y215, and R234. K95 acts as the Proton donor in catalysis.

The protein belongs to the OMP decarboxylase family.

The enzyme catalyses orotidine 5'-phosphate + H(+) = UMP + CO2. It functions in the pathway pyrimidine metabolism; UMP biosynthesis via de novo pathway; UMP from orotate: step 2/2. The sequence is that of Orotidine 5'-phosphate decarboxylase (pyrG) from Phycomyces blakesleeanus (strain ATCC 8743b / DSM 1359 / FGSC 10004 / NBRC 33097 / NRRL 1555).